The following is a 186-amino-acid chain: Large ribosomal subunit protein uL22 (186 aa).

Basic and acidic residues-rich tracts occupy residues 157–167 (VSKATDDEPTK) and 177–186 (RQKEKMLRSE). The tract at residues 157–186 (VSKATDDEPTKKKLSKKKLQRQKEKMLRSE) is disordered.

Belongs to the universal ribosomal protein uL22 family.

The sequence is that of Large ribosomal subunit protein uL22 (RpL17) from Drosophila yakuba (Fruit fly).